Here is a 158-residue protein sequence, read N- to C-terminus: Transcriptional repressor NrdR (158 aa).

A zinc finger lies at Cys-3 to Cys-34. One can recognise an ATP-cone domain in the interval Leu-49 to Ser-139.

This sequence belongs to the NrdR family. The cofactor is Zn(2+).

Its function is as follows. Negatively regulates transcription of bacterial ribonucleotide reductase nrd genes and operons by binding to NrdR-boxes. This Desulforamulus reducens (strain ATCC BAA-1160 / DSM 100696 / MI-1) (Desulfotomaculum reducens) protein is Transcriptional repressor NrdR.